The primary structure comprises 239 residues: EF-hand domain-containing protein D1 (239 aa).

A compositionally biased stretch (basic and acidic residues) spans 1–18 (MASEELACKLERRLRREE). The interval 1–53 (MASEELACKLERRLRREEAEESGPQLAPLGAPAPEPKPEPEPPARAPTASADA) is disordered. EF-hand domains are found at residues 90-125 (RLIK…LGAP) and 126-161 (QTHL…AAAG). The Ca(2+) site is built by aspartate 103, aspartate 107, glutamate 114, aspartate 139, aspartate 141, aspartate 143, lysine 145, and glutamate 150. A Phosphoserine modification is found at serine 201.

Its subcellular location is the mitochondrion inner membrane. Functionally, acts as a calcium sensor for mitochondrial flash (mitoflash) activation, an event characterized by stochastic bursts of superoxide production. May play a role in neuronal differentiation. This is EF-hand domain-containing protein D1 (EFHD1) from Homo sapiens (Human).